The primary structure comprises 1029 residues: DNA repair protein RAD5A (1029 aa).

The tract at residues 83–104 (SVGANHRVEEENESVNGGGEES) is disordered. Residues 406 to 622 (PSTLQMARGG…YSLLRFLRIE (217 aa)) form the Helicase ATP-binding domain. 419–426 (DAMGLGKT) is an ATP binding site. The DEAH box signature appears at 573 to 576 (DEAH). Residues 794–834 (CPICLEALEDAVLTPCAHRLCRECLLASWRNSTSGLCPVCR) form an RING-type zinc finger. Residues 864-1029 (KITALLEELE…RIEELKMLFT (166 aa)) form the Helicase C-terminal domain.

The protein belongs to the SNF2/RAD54 helicase family. RAD16 subfamily.

It is found in the nucleus. Functions in error-free postreplication DNA repair or DNA-damage tolerance (DTT) pathway. Required for homologous recombination (HR) induced by DNA double-strand break (DSB) in somatic cells. Required for damage-induced DNA repair, independently of MUS81 and RECQL4A. Plays a role in synthesis-dependent strand annealing (SDSA) but not in single-strand annealing (SSA). Possesses double-stranded DNA-dependent ATPase activity. Is able to regress replication forks with preference for forks with a leading strand gap. Is able to catalyze branch migration of Holliday junctions and is unaffected by protein blockades. This is DNA repair protein RAD5A from Arabidopsis thaliana (Mouse-ear cress).